A 289-amino-acid chain; its full sequence is D-alanine aminotransferase (289 aa).

Tyr31 provides a ligand contact to substrate. Arg50 contacts pyridoxal 5'-phosphate. Substrate-binding residues include Arg99 and His101. Lys147 serves as the catalytic Proton acceptor. Position 147 is an N6-(pyridoxal phosphate)lysine (Lys147). Glu179 contacts pyridoxal 5'-phosphate.

Belongs to the class-IV pyridoxal-phosphate-dependent aminotransferase family. As to quaternary structure, homodimer. Pyridoxal 5'-phosphate serves as cofactor.

The catalysed reaction is D-alanine + 2-oxoglutarate = D-glutamate + pyruvate. Its function is as follows. Acts on the D-isomers of alanine, leucine, aspartate, glutamate, aminobutyrate, norvaline and asparagine. The enzyme transfers an amino group from a substrate D-amino acid to the pyridoxal phosphate cofactor to form pyridoxamine and an alpha-keto acid in the first half-reaction. The second half-reaction is the reverse of the first, transferring the amino group from the pyridoxamine to a second alpha-keto acid to form the product D-amino acid via a ping-pong mechanism. This is an important process in the formation of D-alanine and D-glutamate, which are essential bacterial cell wall components. In Listeria innocua serovar 6a (strain ATCC BAA-680 / CLIP 11262), this protein is D-alanine aminotransferase (dat).